A 323-amino-acid polypeptide reads, in one-letter code: Coiled-coil domain-containing protein 160 (323 aa).

A coiled-coil region spans residues 143 to 290; that stretch reads SKLRLNLLNE…IKNELRTEKS (148 aa).

The protein belongs to the CCDC160 family.

This Bos taurus (Bovine) protein is Coiled-coil domain-containing protein 160 (CCDC160).